The sequence spans 348 residues: NADH-ubiquinone oxidoreductase chain 2 (348 aa).

Transmembrane regions (helical) follow at residues M1 to S21, W23 to F43, Y56 to F76, I92 to L112, M123 to S143, N148 to L168, L176 to A196, L198 to I218, C242 to L262, S272 to L292, and L321 to I341.

The protein belongs to the complex I subunit 2 family.

The protein localises to the mitochondrion inner membrane. It carries out the reaction a ubiquinone + NADH + 5 H(+)(in) = a ubiquinol + NAD(+) + 4 H(+)(out). Core subunit of the mitochondrial membrane respiratory chain NADH dehydrogenase (Complex I) that is believed to belong to the minimal assembly required for catalysis. Complex I functions in the transfer of electrons from NADH to the respiratory chain. The immediate electron acceptor for the enzyme is believed to be ubiquinone. The polypeptide is NADH-ubiquinone oxidoreductase chain 2 (MT-ND2) (Myxine glutinosa (Atlantic hagfish)).